The primary structure comprises 1353 residues: ABC-type transporter MYCGRDRAFT_41235 (1353 aa).

Residues 40–60 (ASASLWNWFFFSWLNPLIAIG) traverse the membrane as a helical segment. N121 carries N-linked (GlcNAc...) asparagine glycosylation. 6 helical membrane passes run 124-144 (VLVW…ATIT), 172-192 (IGQG…GVMA), 250-270 (FACG…ICLG), 271-291 (LTIA…AILV), 364-384 (VALS…TYAA), and 397-417 (ALTL…AFGA). Positions 129-420 (WVGGAMKLFA…LPVAFGAAAD (292 aa)) constitute an ABC transmembrane type-1 1 domain. In terms of domain architecture, ABC transporter 1 spans 460–684 (YRVQDHSDEK…EGGQMRRVVE (225 aa)). N-linked (GlcNAc...) asparagine glycosylation is present at N481. 496–503 (GPVGAGKS) serves as a coordination point for ATP. The disordered stretch occupies residues 687-720 (ASKSSAEEEEVEDGDLKDGVPSTDGGDASQTTSN). The next 6 membrane-spanning stretches (helical) occupy residues 748 to 768 (PAFT…GSIL), 796 to 816 (LGVS…FFIF), 864 to 882 (AFRM…VVLI), 888 to 907 (WFLL…GMYY), 973 to 993 (LSVR…LIVV), and 1002 to 1022 (AQGG…GFMI). The ABC transmembrane type-1 2 domain occupies 756 to 1030 (ILSMLIFQGG…MIRQSAEIEN (275 aa)). Residues 1070 to 1334 (IEMRDVVFTH…EGGHFRSLCS (265 aa)) enclose the ABC transporter 2 domain. 1104–1111 (GRTGSGKS) is a binding site for ATP. The segment covering 1191 to 1200 (QSSAETLTSS) has biased composition (polar residues). Residues 1191–1223 (QSSAETLTSSDQEKSSPDDAAISPSSHSHSQHL) are disordered. Residues 1208 to 1218 (DDAAISPSSHS) are compositionally biased toward low complexity.

It belongs to the ABC transporter superfamily. ABCC family. Conjugate transporter (TC 3.A.1.208) subfamily.

It is found in the cell membrane. In terms of biological role, multidrug resistance protein; part of the gene cluster 14 that mediates the biosynthesis of a ferrichrome A-like siderophors which may contribute to organismal virulence. This is ABC-type transporter MYCGRDRAFT_41235 from Zymoseptoria tritici (strain CBS 115943 / IPO323) (Speckled leaf blotch fungus).